We begin with the raw amino-acid sequence, 470 residues long: Desmin (470 aa).

A head region spans residues 2–108 (SQAYSSSQRV…QEFLTTRTNE (107 aa)). Ser-7 carries the phosphoserine; by CDK1 modification. At Ser-12 the chain carries Phosphoserine; by AURKB. Arg-16 is modified (omega-N-methylarginine). Thr-17 is subject to Phosphothreonine; by AURKB and ROCK1. Residue Ser-28 is modified to Phosphoserine; by CDK1. Ser-31 is modified (phosphoserine). Ser-32 carries the phosphoserine; by CDK1 modification. Arg-37 bears the Asymmetric dimethylarginine; alternate mark. Arg-37 is modified (omega-N-methylarginine; alternate). Phosphoserine is present on Ser-45. An ADP-ribosylarginine modification is found at Arg-58. Ser-60 bears the Phosphoserine; by AURKB mark. A Phosphoserine modification is found at Ser-68. Arg-70 carries the omega-N-methylarginine modification. Phosphothreonine; by ROCK1 is present on residues Thr-76 and Thr-77. At Ser-81 the chain carries Phosphoserine. One can recognise an IF rod domain in the interval 108-416 (EKVELQELND…KLLEGEESRI (309 aa)). The segment at 109–141 (KVELQELNDRFANYIEKVRFLEQQNAALAAEVN) is coil 1A. Positions 142–151 (RLKGREPTRV) are linker 1. Residues 152 to 252 (AELYEEELRE…HEEEIRELQA (101 aa)) form a coil 1B region. The tract at residues 253–268 (QLQEQQVQVEMDMSKP) is linker 12. Positions 268 to 415 (PDLTAALRDI…RKLLEGEESR (148 aa)) are interaction with NEB. Residues 269-287 (DLTAALRDIRAQYETIAAK) form a coil 2A region. The linker 2 stretch occupies residues 288–295 (NISEAEEW). Residues Ser-290, Ser-358, Ser-361, and Ser-424 each carry the phosphoserine modification. The interval 296-412 (YKSKVSDLTQ…ATYRKLLEGE (117 aa)) is coil 2B. Residues 413-470 (ESRINLPIQTYSALNFRETSPEQRGSEVHTKKTVMIKTIETRDGEVVSEATQQQHEVL) form a tail region. Positions 438–453 (SEVHTKKTVMIKTIET) are interaction with CRYAB.

Belongs to the intermediate filament family. Homomer. Interacts with DST. Interacts with MTM1. Interacts with EPPK1; interaction is dependent of higher-order structure of intermediate filament. Interacts with CRYAB. Interacts with NEB (via nebulin repeats 160-164). Interacts (via rod region) with NEBL (via nebulin repeats 1-5). Interacts with ASB2 isoform 1; the interaction targets DES for proteasomal degradation. Interacts with PLEC isoform 1C. Interacts with PKP1. Interacts with FLII. In terms of processing, ADP-ribosylation prevents ability to form intermediate filaments. Phosphorylation at Ser-7, Ser-28 and Ser-32 by CDK1, phosphorylation at Ser-60 by AURKB and phosphorylation at Thr-76 by ROCK1 contribute to efficient separation of desmin intermediate filaments during mitosis. Post-translationally, ubiquitination by a SCF-like complex containing ASB2 isoform 1 leads to proteasomal degradation.

The protein localises to the cytoplasm. It is found in the myofibril. Its subcellular location is the sarcomere. It localises to the z line. The protein resides in the cell membrane. The protein localises to the sarcolemma. It is found in the nucleus. Its subcellular location is the cell tip. It localises to the nucleus envelope. Its function is as follows. Muscle-specific type III intermediate filament essential for proper muscular structure and function. Plays a crucial role in maintaining the structure of sarcomeres, inter-connecting the Z-disks and forming the myofibrils, linking them not only to the sarcolemmal cytoskeleton, but also to the nucleus and mitochondria, thus providing strength for the muscle fiber during activity. In adult striated muscle they form a fibrous network connecting myofibrils to each other and to the plasma membrane from the periphery of the Z-line structures. May act as a sarcomeric microtubule-anchoring protein: specifically associates with detyrosinated tubulin-alpha chains, leading to buckled microtubules and mechanical resistance to contraction. Required for nuclear membrane integrity, via anchoring at the cell tip and nuclear envelope, resulting in maintenance of microtubule-derived intracellular mechanical forces. Contributes to the transcriptional regulation of the NKX2-5 gene in cardiac progenitor cells during a short period of cardiomyogenesis and in cardiac side population stem cells in the adult. Plays a role in maintaining an optimal conformation of nebulette (NEB) on heart muscle sarcomeres to bind and recruit cardiac alpha-actin. The polypeptide is Desmin (DES) (Homo sapiens (Human)).